The sequence spans 333 residues: Adenosine deaminase (333 aa).

Zn(2+)-binding residues include H12 and H14. Residues H14, D16, and G170 each coordinate substrate. H197 serves as a coordination point for Zn(2+). E200 acts as the Proton donor in catalysis. D278 lines the Zn(2+) pocket. D279 contacts substrate.

It belongs to the metallo-dependent hydrolases superfamily. Adenosine and AMP deaminases family. Adenosine deaminase subfamily. It depends on Zn(2+) as a cofactor.

The catalysed reaction is adenosine + H2O + H(+) = inosine + NH4(+). It catalyses the reaction 2'-deoxyadenosine + H2O + H(+) = 2'-deoxyinosine + NH4(+). In terms of biological role, catalyzes the hydrolytic deamination of adenosine and 2-deoxyadenosine. In Escherichia coli O81 (strain ED1a), this protein is Adenosine deaminase.